The following is a 259-amino-acid chain: Phosphoadenosine 5'-phosphosulfate reductase (259 aa).

The active-site Nucleophile; cysteine thiosulfonate intermediate is C244.

Belongs to the PAPS reductase family. CysH subfamily.

It is found in the cytoplasm. The enzyme catalyses [thioredoxin]-disulfide + sulfite + adenosine 3',5'-bisphosphate + 2 H(+) = [thioredoxin]-dithiol + 3'-phosphoadenylyl sulfate. Its pathway is sulfur metabolism; hydrogen sulfide biosynthesis; sulfite from sulfate: step 3/3. Catalyzes the formation of sulfite from phosphoadenosine 5'-phosphosulfate (PAPS) using thioredoxin as an electron donor. The sequence is that of Phosphoadenosine 5'-phosphosulfate reductase from Vibrio campbellii (strain ATCC BAA-1116).